The following is a 122-amino-acid chain: Large ribosomal subunit protein bL20 (122 aa).

The protein belongs to the bacterial ribosomal protein bL20 family.

Its function is as follows. Binds directly to 23S ribosomal RNA and is necessary for the in vitro assembly process of the 50S ribosomal subunit. It is not involved in the protein synthesizing functions of that subunit. The polypeptide is Large ribosomal subunit protein bL20 (Saccharopolyspora erythraea (strain ATCC 11635 / DSM 40517 / JCM 4748 / NBRC 13426 / NCIMB 8594 / NRRL 2338)).